A 467-amino-acid chain; its full sequence is Hydroxyacid-oxoacid transhydrogenase, mitochondrial (467 aa).

At lysine 445 the chain carries N6-acetyllysine. Phosphoserine is present on serine 452.

It belongs to the iron-containing alcohol dehydrogenase family. Hydroxyacid-oxoacid transhydrogenase subfamily. As to expression, expressed in kidney and liver.

Its subcellular location is the mitochondrion. The catalysed reaction is (S)-3-hydroxybutanoate + 2-oxoglutarate = (R)-2-hydroxyglutarate + acetoacetate. It catalyses the reaction 4-hydroxybutanoate + 2-oxoglutarate = (R)-2-hydroxyglutarate + succinate semialdehyde. In terms of biological role, catalyzes the cofactor-independent reversible oxidation of gamma-hydroxybutyrate (GHB) to succinic semialdehyde (SSA) coupled to reduction of 2-ketoglutarate (2-KG) to D-2-hydroxyglutarate (D-2-HG). L-3-hydroxybutyrate (L-3-OHB) is also a substrate for HOT when using 2-KG as hydrogen acceptor, resulting in the formation of D-2-HG. In Rattus norvegicus (Rat), this protein is Hydroxyacid-oxoacid transhydrogenase, mitochondrial (Adhfe1).